The following is a 249-amino-acid chain: Small ribosomal subunit protein uS3 (249 aa).

The 72-residue stretch at 23-94 folds into the KH type-2 domain; sequence LNEFFTRELS…TVELYAEKVQ (72 aa). Residues serine 32, serine 37, serine 106, and serine 141 each carry the phosphoserine modification.

This sequence belongs to the universal ribosomal protein uS3 family. As to quaternary structure, component of the small ribosomal subunit (SSU). Mature yeast ribosomes consist of a small (40S) and a large (60S) subunit. The 40S small subunit contains 1 molecule of ribosomal RNA (18S rRNA) and at least 33 different proteins. The large 60S subunit contains 3 rRNA molecules (25S, 5.8S and 5S rRNA) and at least 46 different proteins.

It localises to the cytoplasm. Its function is as follows. Component of the ribosome, a large ribonucleoprotein complex responsible for the synthesis of proteins in the cell. The small ribosomal subunit (SSU) binds messenger RNAs (mRNAs) and translates the encoded message by selecting cognate aminoacyl-transfer RNA (tRNA) molecules. The large subunit (LSU) contains the ribosomal catalytic site termed the peptidyl transferase center (PTC), which catalyzes the formation of peptide bonds, thereby polymerizing the amino acids delivered by tRNAs into a polypeptide chain. The nascent polypeptides leave the ribosome through a tunnel in the LSU and interact with protein factors that function in enzymatic processing, targeting, and the membrane insertion of nascent chains at the exit of the ribosomal tunnel. This Schizosaccharomyces pombe (strain 972 / ATCC 24843) (Fission yeast) protein is Small ribosomal subunit protein uS3 (rps3).